We begin with the raw amino-acid sequence, 266 residues long: Chorismate mutase (266 aa).

One can recognise a Chorismate mutase domain in the interval 7–263 (MADSERALNL…EVEYLMQRLI (257 aa)). L-tyrosine-binding residues include Arg77, Arg78, Asn144, Gly146, Ser147, and Thr150. L-tryptophan contacts are provided by Asn144, Gly146, and Ser147.

Homodimer.

It localises to the cytoplasm. The enzyme catalyses chorismate = prephenate. It functions in the pathway metabolic intermediate biosynthesis; prephenate biosynthesis; prephenate from chorismate: step 1/1. With respect to regulation, each dimer has two allosteric binding sites that can bind the regulatory effectors tryptophan or tyrosine. Can bind either one tryptophan or one tyrosine, two tryptophan or two tyrosine or one tryptophan and one tyrosine, which differentially affect the catalytic activity. Activated by tryptophan and subject to feedback inhibition by tyrosine. In the presence of both tryptophan and tyrosine, the enzyme is in the activated state. Catalyzes the Claisen rearrangement of chorismate to prephenate. Acts at the first branch point in the aromatic amino acid pathway where it steers biosynthesis towards phenylalanine and tyrosine, and away from tryptophan. This is Chorismate mutase from Trichoderma parareesei (Filamentous fungus).